The primary structure comprises 221 residues: Histone H1C (221 aa).

Low complexity-rich tracts occupy residues 1-11 (MTETAATETTP) and 27-44 (KKAAGGAKAKKPSGPSAS). Disordered regions lie at residues 1-44 (MTET…PSAS) and 123-221 (AKKK…AAKK). One can recognise an H15 domain in the interval 39-112 (SGPSASELIV…GASGSFKLNK (74 aa)). Basic residues-rich tracts occupy residues 123–150 (AKKKLVAPKAKKPVAAKKKPKSPKKPKK) and 158–221 (SPKK…AAKK).

Belongs to the histone H1/H5 family.

The protein resides in the nucleus. It is found in the chromosome. Histones H1 are necessary for the condensation of nucleosome chains into higher-order structures. The polypeptide is Histone H1C (Xenopus laevis (African clawed frog)).